The sequence spans 90 residues: Defensin-like protein 293 (90 aa).

An N-terminal signal peptide occupies residues 1–26 (MTSRAKSLFIFFFLISCTFMLLETDA). Intrachain disulfides connect C63–C83, C69–C88, and C75–C90.

The protein belongs to the DEFL family.

It is found in the secreted. The chain is Defensin-like protein 293 from Arabidopsis thaliana (Mouse-ear cress).